The sequence spans 380 residues: Chaperone protein DnaJ (380 aa).

Residues 5-70 (DFYETLGVSK…QKRAAYDRFG (66 aa)) form the J domain. A CR-type zinc finger spans residues 141–219 (GKTAQIRVPT…CHGQGRVTEE (79 aa)). Positions 154, 157, 171, 174, 193, 196, 207, and 210 each coordinate Zn(2+). CXXCXGXG motif repeat units follow at residues 154–161 (CEVCSGSG), 171–178 (CATCQGSG), 193–200 (CPTCQGRG), and 207–214 (CGKCHGQG).

This sequence belongs to the DnaJ family. Homodimer. Zn(2+) is required as a cofactor.

It localises to the cytoplasm. Its function is as follows. Participates actively in the response to hyperosmotic and heat shock by preventing the aggregation of stress-denatured proteins and by disaggregating proteins, also in an autonomous, DnaK-independent fashion. Unfolded proteins bind initially to DnaJ; upon interaction with the DnaJ-bound protein, DnaK hydrolyzes its bound ATP, resulting in the formation of a stable complex. GrpE releases ADP from DnaK; ATP binding to DnaK triggers the release of the substrate protein, thus completing the reaction cycle. Several rounds of ATP-dependent interactions between DnaJ, DnaK and GrpE are required for fully efficient folding. Also involved, together with DnaK and GrpE, in the DNA replication of plasmids through activation of initiation proteins. This is Chaperone protein DnaJ from Allorhizobium ampelinum (strain ATCC BAA-846 / DSM 112012 / S4) (Agrobacterium vitis (strain S4)).